We begin with the raw amino-acid sequence, 232 residues long: Ribonuclease P protein component 3 (232 aa).

This sequence belongs to the eukaryotic/archaeal RNase P protein component 3 family. Consists of a catalytic RNA component and at least 4-5 protein subunits. Forms a subcomplex with Rnp2 which stimulates the catalytic RNA.

It is found in the cytoplasm. The catalysed reaction is Endonucleolytic cleavage of RNA, removing 5'-extranucleotides from tRNA precursor.. Functionally, part of ribonuclease P, a protein complex that generates mature tRNA molecules by cleaving their 5'-ends. The chain is Ribonuclease P protein component 3 from Methanocaldococcus jannaschii (strain ATCC 43067 / DSM 2661 / JAL-1 / JCM 10045 / NBRC 100440) (Methanococcus jannaschii).